The chain runs to 197 residues: Signal-regulatory protein delta (197 aa).

A signal peptide spans 1 to 29 (MPIPASPLHPPLPSLLLYLLLELAGVTHV). The Ig-like V-type domain maps to 31–135 (HVQQTEMSQT…IKEYQSGRGT (105 aa)). An intrachain disulfide couples Cys-51 to Cys-117. Positions 139 to 158 (VTEQNPRPPKNRPAGRAGSR) are disordered. Asn-174 is a glycosylation site (N-linked (GlcNAc...) asparagine).

The protein resides in the secreted. In Homo sapiens (Human), this protein is Signal-regulatory protein delta (SIRPD).